We begin with the raw amino-acid sequence, 528 residues long: Pentatricopeptide repeat-containing protein At1g62914, mitochondrial (528 aa).

The transit peptide at 1–20 (MLAKISSSAKRFVHRSLVVR) directs the protein to the mitochondrion. PPR repeat units follow at residues 77-111 (SIIE…GISH), 112-146 (NLYT…GYEP), 147-181 (DIVT…GYKP), 182-216 (DTVT…GCQP), 217-251 (DLVT…KIEA), 252-286 (NVVI…GVRP), 287-321 (NVIT…KINP), 322-356 (NLVT…SIDP), 357-391 (NIFT…DCLP), 392-426 (NVVT…GLVG), 427-461 (NTVT…GVHP), 462-496 (NILT…TMEP), and 497-528 (DIYT…ALKE).

This sequence belongs to the PPR family. P subfamily.

It localises to the mitochondrion. The polypeptide is Pentatricopeptide repeat-containing protein At1g62914, mitochondrial (Arabidopsis thaliana (Mouse-ear cress)).